The chain runs to 682 residues: DNA ligase (682 aa).

Residues 42 to 46 (DAAYD), 88 to 89 (SL), and Glu-121 contribute to the NAD(+) site. The N6-AMP-lysine intermediate role is filled by Lys-123. Residues Arg-144, Glu-180, Lys-291, and Lys-315 each coordinate NAD(+). Residues Cys-409, Cys-412, Cys-427, and Cys-433 each coordinate Zn(2+). The BRCT domain maps to 601–682 (AAGGALAGKT…FRSLAGLPPG (82 aa)).

This sequence belongs to the NAD-dependent DNA ligase family. LigA subfamily. Mg(2+) serves as cofactor. The cofactor is Mn(2+).

It catalyses the reaction NAD(+) + (deoxyribonucleotide)n-3'-hydroxyl + 5'-phospho-(deoxyribonucleotide)m = (deoxyribonucleotide)n+m + AMP + beta-nicotinamide D-nucleotide.. Its function is as follows. DNA ligase that catalyzes the formation of phosphodiester linkages between 5'-phosphoryl and 3'-hydroxyl groups in double-stranded DNA using NAD as a coenzyme and as the energy source for the reaction. It is essential for DNA replication and repair of damaged DNA. The protein is DNA ligase of Acidiphilium cryptum (strain JF-5).